Reading from the N-terminus, the 679-residue chain is Transketolase (679 aa).

Histidine 30 provides a ligand contact to substrate. Thiamine diphosphate contacts are provided by residues histidine 69 and 116–118 (GPL). Aspartate 157 serves as a coordination point for Mg(2+). Thiamine diphosphate-binding residues include glycine 158 and asparagine 187. Mg(2+)-binding residues include asparagine 187 and isoleucine 189. Residues histidine 262, arginine 358, and serine 385 each coordinate substrate. Residue histidine 262 participates in thiamine diphosphate binding. Residues glutamate 417 and phenylalanine 444 each contribute to the thiamine diphosphate site. Glutamate 417 (proton donor) is an active-site residue. Residues histidine 468, aspartate 476, and arginine 527 each coordinate substrate.

It belongs to the transketolase family. As to quaternary structure, homodimer. It depends on Mg(2+) as a cofactor. Requires Ca(2+) as cofactor. Mn(2+) serves as cofactor. The cofactor is Co(2+). Thiamine diphosphate is required as a cofactor.

The enzyme catalyses D-sedoheptulose 7-phosphate + D-glyceraldehyde 3-phosphate = aldehydo-D-ribose 5-phosphate + D-xylulose 5-phosphate. Its function is as follows. Catalyzes the transfer of a two-carbon ketol group from a ketose donor to an aldose acceptor, via a covalent intermediate with the cofactor thiamine pyrophosphate. This Kluyveromyces lactis (strain ATCC 8585 / CBS 2359 / DSM 70799 / NBRC 1267 / NRRL Y-1140 / WM37) (Yeast) protein is Transketolase (TKL1).